The chain runs to 322 residues: Crystallin J1A (322 aa).

It belongs to the ADP-ribosylglycohydrolase family. J1 crystallin subfamily. Expressed in the rhopalia. Present in both the large and small eyes.

This chain is Crystallin J1A, found in Tripedalia cystophora (Jellyfish).